Here is a 140-residue protein sequence, read N- to C-terminus: Large ribosomal subunit protein uL16 (140 aa).

Over residues 1 to 17 the composition is skewed to basic residues; sequence MPLMPKRVKHRKMHRGS. Positions 1–21 are disordered; it reads MPLMPKRVKHRKMHRGSRSGN.

This sequence belongs to the universal ribosomal protein uL16 family. In terms of assembly, part of the 50S ribosomal subunit.

In terms of biological role, binds 23S rRNA and is also seen to make contacts with the A and possibly P site tRNAs. The chain is Large ribosomal subunit protein uL16 from Akkermansia muciniphila (strain ATCC BAA-835 / DSM 22959 / JCM 33894 / BCRC 81048 / CCUG 64013 / CIP 107961 / Muc).